The primary structure comprises 151 residues: Deoxyuridine 5'-triphosphate nucleotidohydrolase (151 aa).

Arg28 serves as a coordination point for Mg(2+). DUTP-binding positions include Pro72–Ser74, Gly86–Asp89, Tyr92, Gly97, Ile99, and Arg115.

It belongs to the dUTPase family. It depends on Mg(2+) as a cofactor.

It catalyses the reaction dUTP + H2O = dUMP + diphosphate + H(+). Its function is as follows. This enzyme is involved in nucleotide metabolism: it produces dUMP, the immediate precursor of thymidine nucleotides and it decreases the intracellular concentration of dUTP so that uracil cannot be incorporated into DNA. The chain is Deoxyuridine 5'-triphosphate nucleotidohydrolase (OPG046) from Monkeypox virus.